Here is a 416-residue protein sequence, read N- to C-terminus: Serine hydroxymethyltransferase 1 (416 aa).

(6S)-5,6,7,8-tetrahydrofolate contacts are provided by residues Leu-121 and 125 to 127 (GHL). An N6-(pyridoxal phosphate)lysine modification is found at Lys-229. Residues Glu-245 and 354–356 (SPF) each bind (6S)-5,6,7,8-tetrahydrofolate.

This sequence belongs to the SHMT family. As to quaternary structure, homodimer. The cofactor is pyridoxal 5'-phosphate.

The protein resides in the cytoplasm. It catalyses the reaction (6R)-5,10-methylene-5,6,7,8-tetrahydrofolate + glycine + H2O = (6S)-5,6,7,8-tetrahydrofolate + L-serine. It participates in one-carbon metabolism; tetrahydrofolate interconversion. It functions in the pathway amino-acid biosynthesis; glycine biosynthesis; glycine from L-serine: step 1/1. Functionally, catalyzes the reversible interconversion of serine and glycine with tetrahydrofolate (THF) serving as the one-carbon carrier. This reaction serves as the major source of one-carbon groups required for the biosynthesis of purines, thymidylate, methionine, and other important biomolecules. Also exhibits THF-independent aldolase activity toward beta-hydroxyamino acids, producing glycine and aldehydes, via a retro-aldol mechanism. This Photobacterium profundum (strain SS9) protein is Serine hydroxymethyltransferase 1.